An 813-amino-acid chain; its full sequence is Hyaluronate lyase HylB (813 aa).

The tat-type signal signal peptide spans 1 to 32 (MFGTPSRRTFLTASALSAMALAASPTVTDAIA). Active-site residues include N222, H272, and Y281.

Belongs to the polysaccharide lyase 8 family. Post-translationally, predicted to be exported by the Tat system. The position of the signal peptide cleavage has not been experimentally proven.

Its subcellular location is the secreted. The catalysed reaction is [hyaluronan](n) = n 3-(4-deoxy-beta-D-gluc-4-enuronosyl)-N-acetyl-D-glucosamine + H2O. Functionally, degrades hyaluronic acid (HA) exclusively into HA disaccharides (HA-2). Produced HA-2s confer anti-inflammatory properties leading to reduced immunopathology in the mouse model of acne. In Cutibacterium acnes (strain DSM 16379 / KPA171202) (Propionibacterium acnes), this protein is Hyaluronate lyase HylB.